The chain runs to 413 residues: Glucose-1-phosphate adenylyltransferase (413 aa).

Residues Tyr102, Gly167, Glu182–Lys183, and Ser200 contribute to the alpha-D-glucose 1-phosphate site.

The protein belongs to the bacterial/plant glucose-1-phosphate adenylyltransferase family. Homotetramer.

The enzyme catalyses alpha-D-glucose 1-phosphate + ATP + H(+) = ADP-alpha-D-glucose + diphosphate. It functions in the pathway glycan biosynthesis; glycogen biosynthesis. Involved in the biosynthesis of ADP-glucose, a building block required for the elongation reactions to produce glycogen. Catalyzes the reaction between ATP and alpha-D-glucose 1-phosphate (G1P) to produce pyrophosphate and ADP-Glc. The sequence is that of Glucose-1-phosphate adenylyltransferase from Deinococcus radiodurans (strain ATCC 13939 / DSM 20539 / JCM 16871 / CCUG 27074 / LMG 4051 / NBRC 15346 / NCIMB 9279 / VKM B-1422 / R1).